We begin with the raw amino-acid sequence, 423 residues long: Gamma-glutamyl phosphate reductase (423 aa).

Belongs to the gamma-glutamyl phosphate reductase family.

The protein localises to the cytoplasm. It carries out the reaction L-glutamate 5-semialdehyde + phosphate + NADP(+) = L-glutamyl 5-phosphate + NADPH + H(+). Its pathway is amino-acid biosynthesis; L-proline biosynthesis; L-glutamate 5-semialdehyde from L-glutamate: step 2/2. In terms of biological role, catalyzes the NADPH-dependent reduction of L-glutamate 5-phosphate into L-glutamate 5-semialdehyde and phosphate. The product spontaneously undergoes cyclization to form 1-pyrroline-5-carboxylate. This chain is Gamma-glutamyl phosphate reductase, found in Pseudomonas putida (strain W619).